Consider the following 224-residue polypeptide: MSGLALEFCNVSKFFRDKTEQEIAILRNTNLQIHTGEIIALIGASGVGKTTTLQIAGLLNKQDSGKVKICGKEASHLDTTLRRKEIGFIYQFHHLLSELNVLKNVMLPLLISGTPKTIAEKRAKELLEFLKLEKVAYQPVDTLSGGQKQRVAVARAVIKKPALIIADEPTGNLDPNTAKDVFDLVCSFAKENGSAVFLATHDPSFLQKASRVLEIVNHSLISSI.

One can recognise an ABC transporter domain in the interval 6 to 224 (LEFCNVSKFF…IVNHSLISSI (219 aa)). 43 to 50 (GASGVGKT) is a binding site for ATP.

The protein belongs to the ABC transporter superfamily. Lipoprotein translocase (TC 3.A.1.125) family. In terms of assembly, the complex is composed of two ATP-binding proteins (LolD) and two transmembrane proteins (LolC and LolE).

It is found in the cell inner membrane. In terms of biological role, part of the ABC transporter complex LolCDE involved in the translocation of mature outer membrane-directed lipoproteins, from the inner membrane to the periplasmic chaperone, LolA. Responsible for the formation of the LolA-lipoprotein complex in an ATP-dependent manner. This chain is Lipoprotein-releasing system ATP-binding protein LolD, found in Neorickettsia sennetsu (strain ATCC VR-367 / Miyayama) (Ehrlichia sennetsu).